The following is a 333-amino-acid chain: Glycogenin-1 (333 aa).

An N-acetylthreonine modification is found at Thr2. Positions 9, 11, 12, and 15 each coordinate UDP. Leu9, Thr11, Asn12, and Tyr15 together coordinate UDP-alpha-D-glucose. Ser44 is subject to Phosphoserine; by PKA; in vitro. Arg77 contacts UDP. UDP-alpha-D-glucose contacts are provided by Arg77, Lys86, Asp102, Ala103, Asp104, Asn133, Ser134, Asp160, Asp163, and Gln164. Asp102, Ala103, and Asp104 together coordinate UDP. Mn(2+) is bound at residue Asp102. Residue Asp104 participates in Mn(2+) binding. Residue Tyr195 is glycosylated (O-linked (Glc...) tyrosine). UDP is bound by residues His212, Gly215, and Lys218. Residue His212 coordinates Mn(2+). 2 residues coordinate UDP-alpha-D-glucose: Gly215 and Lys218. The tract at residues 284–316 (SHLSLGETPATTQPFVSSEERKERWEQGQADYM) is interaction with GYS1.

The protein belongs to the glycosyltransferase 8 family. Glycogenin subfamily. In terms of assembly, part of the GYS1-GYG1 complex, a heterooctamer composed of a tetramer of GYS1 and 2 dimers of GYG1, where each GYS1 protomer binds to one GYG1 subunit (via GYG1 C-terminus); the GYS1 tetramer may dissociate from GYG1 dimers to continue glycogen polymerization on its own. May also form a heterooctamer complex with GYS2 (via GYG1 C-terminus). Requires Mn(2+) as cofactor. Self-glycosylated by the transfer of glucose residues from UDP-glucose to itself, forming an alpha-1,4-glycan of around 10 residues attached to Tyr-195. Post-translationally, phosphorylated. Detected in heart, skeletal muscle, brain and testis, and at lower levels in kidney.

It is found in the cytoplasm. It localises to the nucleus. It catalyses the reaction L-tyrosyl-[glycogenin] + UDP-alpha-D-glucose = alpha-D-glucosyl-L-tyrosyl-[glycogenin] + UDP + H(+). The enzyme catalyses [1,4-alpha-D-glucosyl](n)-L-tyrosyl-[glycogenin] + UDP-alpha-D-glucose = [1,4-alpha-D-glucosyl](n+1)-L-tyrosyl-[glycogenin] + UDP + H(+). Its pathway is glycan biosynthesis; glycogen biosynthesis. Functionally, glycogenin participates in the glycogen biosynthetic process along with glycogen synthase and glycogen branching enzyme. It catalyzes the formation of a short alpha (1,4)-glucosyl chain covalently attached via a glucose 1-O-tyrosyl linkage to internal tyrosine residues and these chains act as primers for the elongation reaction catalyzed by glycogen synthase. The sequence is that of Glycogenin-1 (GYG1) from Oryctolagus cuniculus (Rabbit).